The chain runs to 695 residues: Threonine--tRNA ligase (695 aa).

The TGS domain maps to 6 to 75 (SAIFVNTTDT…ETTATFTAVP (70 aa)). The tract at residues 274-580 (DHRRLGTELD…LLEHYAGAFP (307 aa)) is catalytic. Zn(2+) is bound by residues cysteine 379, histidine 430, and histidine 557.

This sequence belongs to the class-II aminoacyl-tRNA synthetase family. As to quaternary structure, homodimer. Requires Zn(2+) as cofactor.

It is found in the cytoplasm. It catalyses the reaction tRNA(Thr) + L-threonine + ATP = L-threonyl-tRNA(Thr) + AMP + diphosphate + H(+). Its function is as follows. Catalyzes the attachment of threonine to tRNA(Thr) in a two-step reaction: L-threonine is first activated by ATP to form Thr-AMP and then transferred to the acceptor end of tRNA(Thr). Also edits incorrectly charged L-seryl-tRNA(Thr). The protein is Threonine--tRNA ligase of Corynebacterium glutamicum (strain ATCC 13032 / DSM 20300 / JCM 1318 / BCRC 11384 / CCUG 27702 / LMG 3730 / NBRC 12168 / NCIMB 10025 / NRRL B-2784 / 534).